Consider the following 232-residue polypeptide: Orotate phosphoribosyltransferase (232 aa).

5-phospho-alpha-D-ribose 1-diphosphate is bound by residues R107, K108, K111, H113, and 133–141 (EDLTTAGGS). Residue T137 participates in orotate binding.

The protein belongs to the purine/pyrimidine phosphoribosyltransferase family. PyrE subfamily. In terms of assembly, homodimer. It depends on Mg(2+) as a cofactor.

It catalyses the reaction orotidine 5'-phosphate + diphosphate = orotate + 5-phospho-alpha-D-ribose 1-diphosphate. Its pathway is pyrimidine metabolism; UMP biosynthesis via de novo pathway; UMP from orotate: step 1/2. Its function is as follows. Catalyzes the transfer of a ribosyl phosphate group from 5-phosphoribose 1-diphosphate to orotate, leading to the formation of orotidine monophosphate (OMP). This Agrobacterium fabrum (strain C58 / ATCC 33970) (Agrobacterium tumefaciens (strain C58)) protein is Orotate phosphoribosyltransferase.